A 495-amino-acid chain; its full sequence is Glycerol kinase (495 aa).

Thr-11 is an ADP binding site. Residues Thr-11, Thr-12, and Ser-13 each contribute to the ATP site. Thr-11 serves as a coordination point for sn-glycerol 3-phosphate. Arg-15 lines the ADP pocket. Sn-glycerol 3-phosphate contacts are provided by Arg-81, Glu-82, Tyr-133, and Asp-242. Glycerol is bound by residues Arg-81, Glu-82, Tyr-133, Asp-242, and Gln-243. Thr-264 and Gly-307 together coordinate ADP. The ATP site is built by Thr-264, Gly-307, Gln-311, and Gly-410. ADP is bound at residue Gly-410.

This sequence belongs to the FGGY kinase family.

It carries out the reaction glycerol + ATP = sn-glycerol 3-phosphate + ADP + H(+). It functions in the pathway polyol metabolism; glycerol degradation via glycerol kinase pathway; sn-glycerol 3-phosphate from glycerol: step 1/1. With respect to regulation, inhibited by fructose 1,6-bisphosphate (FBP). Functionally, key enzyme in the regulation of glycerol uptake and metabolism. Catalyzes the phosphorylation of glycerol to yield sn-glycerol 3-phosphate. This is Glycerol kinase from Roseobacter denitrificans (strain ATCC 33942 / OCh 114) (Erythrobacter sp. (strain OCh 114)).